The following is a 78-amino-acid chain: Large ribosomal subunit protein bL28B (78 aa).

Positions 1–29 are disordered; that stretch reads MSAHCQVTGRKPGFGNTVSHSHRRSRRRW. A compositionally biased stretch (basic residues) spans 20-29; that stretch reads HSHRRSRRRW.

The protein belongs to the bacterial ribosomal protein bL28 family.

In Mycobacterium bovis (strain ATCC BAA-935 / AF2122/97), this protein is Large ribosomal subunit protein bL28B (rpmB2).